Consider the following 690-residue polypeptide: Protein hook (690 aa).

Residues 6–122 (MEIYESLIRW…RLLQLILGCA (117 aa)) enclose the Calponin-homology (CH) domain. 2 coiled-coil regions span residues 134–515 (QIME…HHAE) and 546–577 (ETTQ…QAAD).

The protein belongs to the hook family. In terms of assembly, homodimer. Interacts with microtubules via its N-terminus.

The protein resides in the cytoplasm. It is found in the cytoskeleton. It localises to the endosome. In terms of biological role, involved in endocytic trafficking. Probably acts as a cytoskeletal linker protein that tethers endosome vesicles to the cytoskeleton. This Anopheles gambiae (African malaria mosquito) protein is Protein hook.